Reading from the N-terminus, the 244-residue chain is Putative outer membrane protein RC0105 (244 aa).

Residues 1 to 23 form the signal peptide; it reads MLRIVKKLGIILFVSTISINSFA.

Belongs to the OmpW/AlkL family.

The protein resides in the cell outer membrane. This Rickettsia conorii (strain ATCC VR-613 / Malish 7) protein is Putative outer membrane protein RC0105.